The sequence spans 307 residues: uncharacterized protein (307 aa).

The protein to B.burgdorferi BB0340.

This is an uncharacterized protein from Treponema pallidum (strain Nichols).